The chain runs to 468 residues: Cysteine--tRNA ligase (468 aa).

C33 contributes to the Zn(2+) binding site. Residues 35 to 45 carry the 'HIGH' region motif; sequence ATVQGLPHIGH. Zn(2+)-binding residues include C211, H236, and E240. The 'KMSKS' region signature appears at 267 to 271; it reads KMSKS. K270 is a binding site for ATP.

The protein belongs to the class-I aminoacyl-tRNA synthetase family. Monomer. Zn(2+) is required as a cofactor.

Its subcellular location is the cytoplasm. The catalysed reaction is tRNA(Cys) + L-cysteine + ATP = L-cysteinyl-tRNA(Cys) + AMP + diphosphate. The polypeptide is Cysteine--tRNA ligase (Mycolicibacterium paratuberculosis (strain ATCC BAA-968 / K-10) (Mycobacterium paratuberculosis)).